A 314-amino-acid polypeptide reads, in one-letter code: tRNA-cytidine(32) 2-sulfurtransferase (314 aa).

Residues 39–44 (SGGKDS) carry the PP-loop motif motif. Residues Cys-114, Cys-117, and Cys-205 each coordinate [4Fe-4S] cluster.

This sequence belongs to the TtcA family. In terms of assembly, homodimer. The cofactor is Mg(2+). [4Fe-4S] cluster is required as a cofactor.

Its subcellular location is the cytoplasm. It carries out the reaction cytidine(32) in tRNA + S-sulfanyl-L-cysteinyl-[cysteine desulfurase] + AH2 + ATP = 2-thiocytidine(32) in tRNA + L-cysteinyl-[cysteine desulfurase] + A + AMP + diphosphate + H(+). Its pathway is tRNA modification. Its function is as follows. Catalyzes the ATP-dependent 2-thiolation of cytidine in position 32 of tRNA, to form 2-thiocytidine (s(2)C32). The sulfur atoms are provided by the cysteine/cysteine desulfurase (IscS) system. The chain is tRNA-cytidine(32) 2-sulfurtransferase from Cupriavidus metallidurans (strain ATCC 43123 / DSM 2839 / NBRC 102507 / CH34) (Ralstonia metallidurans).